Consider the following 602-residue polypeptide: Prostaglandin G/H synthase 1 (602 aa).

Positions 1–26 (MSRRSLSLWFPLLLLLLLPPTPSVLL) are cleaved as a signal peptide. Residues 34-72 (PVNPCCYYPCQNQGVCVRFGLDNYQCDCTRTGYSGPNCT) enclose the EGF-like domain. 4 disulfide bridges follow: C38-C49, C39-C161, C43-C59, and C61-C71. N70, N106, and N146 each carry an N-linked (GlcNAc...) asparagine glycan. H209 acts as the Proton acceptor in catalysis. The active-site For cyclooxygenase activity is Y387. Position 390 (H390) interacts with heme b. A disulfide bridge links C571 with C577.

Belongs to the prostaglandin G/H synthase family. As to quaternary structure, homodimer. Requires heme b as cofactor.

The protein resides in the microsome membrane. The protein localises to the endoplasmic reticulum membrane. It catalyses the reaction (5Z,8Z,11Z,14Z)-eicosatetraenoate + AH2 + 2 O2 = prostaglandin H2 + A + H2O. The enzyme catalyses (5Z,8Z,11Z,14Z)-eicosatetraenoate + 2 O2 = prostaglandin G2. The catalysed reaction is prostaglandin G2 + AH2 = prostaglandin H2 + A + H2O. It carries out the reaction (9Z,12Z)-octadecadienoate + AH2 + O2 = (9R)-hydroxy-(10E,12Z)-octadecadienoate + A + H2O. It catalyses the reaction (9Z,12Z)-octadecadienoate + AH2 + O2 = (9S)-hydroxy-(10E,12Z)-octadecadienoate + A + H2O. The enzyme catalyses (9Z,12Z)-octadecadienoate + AH2 + O2 = (13S)-hydroxy-(9Z,11E)-octadecadienoate + A + H2O. The catalysed reaction is (9Z,12Z)-octadecadienoate + AH2 + O2 = (13R)-hydroxy-(9Z,11E)-octadecadienoate + A + H2O. Its pathway is lipid metabolism; prostaglandin biosynthesis. Its activity is regulated as follows. The cyclooxygenase activity is inhibited by nonsteroidal anti-inflammatory drugs (NSAIDs) including ibuprofen, flurbiprofen, ketoprofen, naproxen, flurbiprofen, anirolac, fenclofenac and diclofenac. Dual cyclooxygenase and peroxidase that plays an important role in the biosynthesis pathway of prostanoids, a class of C20 oxylipins mainly derived from arachidonate ((5Z,8Z,11Z,14Z)-eicosatetraenoate, AA, C20:4(n-6)), with a particular role in the inflammatory response. The cyclooxygenase activity oxygenates AA to the hydroperoxy endoperoxide prostaglandin G2 (PGG2), and the peroxidase activity reduces PGG2 to the hydroxy endoperoxide prostaglandin H2 (PGH2), the precursor of all 2-series prostaglandins and thromboxanes. This complex transformation is initiated by abstraction of hydrogen at carbon 13 (with S-stereochemistry), followed by insertion of molecular O2 to form the endoperoxide bridge between carbon 9 and 11 that defines prostaglandins. The insertion of a second molecule of O2 (bis-oxygenase activity) yields a hydroperoxy group in PGG2 that is then reduced to PGH2 by two electrons. Involved in the constitutive production of prostanoids in particular in the stomach and platelets. In gastric epithelial cells, it is a key step in the generation of prostaglandins, such as prostaglandin E2 (PGE2), which plays an important role in cytoprotection. In platelets, it is involved in the generation of thromboxane A2 (TXA2), which promotes platelet activation and aggregation, vasoconstriction and proliferation of vascular smooth muscle cells. Can also use linoleate (LA, (9Z,12Z)-octadecadienoate, C18:2(n-6)) as substrate and produce hydroxyoctadecadienoates (HODEs) in a regio- and stereospecific manner, being (9R)-HODE ((9R)-hydroxy-(10E,12Z)-octadecadienoate) and (13S)-HODE ((13S)-hydroxy-(9Z,11E)-octadecadienoate) its major products. The protein is Prostaglandin G/H synthase 1 of Mus musculus (Mouse).